Reading from the N-terminus, the 65-residue chain is Toxin Cbo5 (65 aa).

An LCN-type CS-alpha/beta domain is found at 2–65; sequence KDGYLVDKTG…QTWPLPNKSC (64 aa). Cystine bridges form between cysteine 12–cysteine 65, cysteine 16–cysteine 41, cysteine 25–cysteine 46, and cysteine 29–cysteine 48.

It belongs to the long (4 C-C) scorpion toxin superfamily. Sodium channel inhibitor family. Beta subfamily. In terms of tissue distribution, expressed by the venom gland.

The protein localises to the secreted. A probable toxin that has no activity on the tested sodium channels (when tested at 200 nM) and is not toxic to mice, crickets or sweet water shrimps. It resembles Beta toxins that bind voltage-independently at site-4 of sodium channels and shift the voltage of activation toward more negative potentials, thereby affecting sodium channel activation and promoting spontaneous and repetitive firing. This chain is Toxin Cbo5, found in Centruroides bonito (Scorpion).